The chain runs to 473 residues: Sensor histidine kinase GtrS (473 aa).

Residues 1–8 are Cytoplasmic-facing; it reads MPRSLLGR. Residues 9-29 traverse the membrane as a helical segment; sequence MLLLTLLAVLVAQGLSSLFWL. The Periplasmic portion of the chain corresponds to 30-197; the sequence is SHLRSSQREG…LEPEGLQPQQ (168 aa). The chain crosses the membrane as a helical span at residues 198–218; sequence VLSIVFTSLLLLLFTGLLMHW. The HAMP domain occupies 217-269; it reads HWQSRPLKRLARAARDLALGSPSAALEERGASELVEVARAFNTMHERIDRYLN. The Cytoplasmic segment spans residues 219–473; the sequence is QSRPLKRLAR…SLRLPRLGLE (255 aa). One can recognise a Histidine kinase domain in the interval 277–471; it reads AISHDLRTPI…RVSLRLPRLG (195 aa). Residue His280 is modified to Phosphohistidine; by autocatalysis.

Autophosphorylated.

It is found in the cell inner membrane. The enzyme catalyses ATP + protein L-histidine = ADP + protein N-phospho-L-histidine.. Functionally, member of the two-component regulatory system GtrS/GltR involved in the regulation of glucose metabolism and transport, as well as regulation of the exotoxin A gene expression. GtrS recognizes and binds 2-ketogluconate and 6-phosphogluconate via its sensor domain, which accelerates GtrS autophosphorylation and concomitant transphosphorylation and regulation of the response regulator GltR. In terms of biological role, plays a key role during bacteria-host interactions and is required for optimal colonization and dissemination in a mouse model of infection. Contributes to modulation of the type III secretion system (T3SS) in response to host cells via the regulation of the OprB transport system. This Pseudomonas aeruginosa (strain ATCC 15692 / DSM 22644 / CIP 104116 / JCM 14847 / LMG 12228 / 1C / PRS 101 / PAO1) protein is Sensor histidine kinase GtrS.